We begin with the raw amino-acid sequence, 376 residues long: Chaperone protein DnaJ (376 aa).

A J domain is found at 5–70; it reads DYYEILGVER…QKRAAYDKFG (66 aa). The CR-type zinc finger occupies 131–209; sequence GVSKEIKVPT…CHGDGRVQKT (79 aa). Zn(2+)-binding residues include C144, C147, C161, C164, C183, C186, C197, and C200. CXXCXGXG motif repeat units follow at residues 144–151, 161–168, 183–190, and 197–204; these read CDECHGSG, CPTCHGSG, CPHCHGKG, and CRKCHGDG.

Belongs to the DnaJ family. As to quaternary structure, homodimer. Zn(2+) serves as cofactor.

The protein resides in the cytoplasm. In terms of biological role, participates actively in the response to hyperosmotic and heat shock by preventing the aggregation of stress-denatured proteins and by disaggregating proteins, also in an autonomous, DnaK-independent fashion. Unfolded proteins bind initially to DnaJ; upon interaction with the DnaJ-bound protein, DnaK hydrolyzes its bound ATP, resulting in the formation of a stable complex. GrpE releases ADP from DnaK; ATP binding to DnaK triggers the release of the substrate protein, thus completing the reaction cycle. Several rounds of ATP-dependent interactions between DnaJ, DnaK and GrpE are required for fully efficient folding. Also involved, together with DnaK and GrpE, in the DNA replication of plasmids through activation of initiation proteins. In Tolumonas auensis (strain DSM 9187 / NBRC 110442 / TA 4), this protein is Chaperone protein DnaJ.